A 407-amino-acid polypeptide reads, in one-letter code: Phosphopentomutase (407 aa).

Residues Asp-11, Asp-305, His-310, Asp-346, His-347, and His-358 each coordinate Mn(2+).

The protein belongs to the phosphopentomutase family. It depends on Mn(2+) as a cofactor.

It is found in the cytoplasm. It carries out the reaction 2-deoxy-alpha-D-ribose 1-phosphate = 2-deoxy-D-ribose 5-phosphate. It catalyses the reaction alpha-D-ribose 1-phosphate = D-ribose 5-phosphate. Its pathway is carbohydrate degradation; 2-deoxy-D-ribose 1-phosphate degradation; D-glyceraldehyde 3-phosphate and acetaldehyde from 2-deoxy-alpha-D-ribose 1-phosphate: step 1/2. Its function is as follows. Isomerase that catalyzes the conversion of deoxy-ribose 1-phosphate (dRib-1-P) and ribose 1-phosphate (Rib-1-P) to deoxy-ribose 5-phosphate (dRib-5-P) and ribose 5-phosphate (Rib-5-P), respectively. In Legionella pneumophila (strain Lens), this protein is Phosphopentomutase.